Consider the following 421-residue polypeptide: Gamma-glutamyl phosphate reductase (421 aa).

The protein belongs to the gamma-glutamyl phosphate reductase family.

It localises to the cytoplasm. The enzyme catalyses L-glutamate 5-semialdehyde + phosphate + NADP(+) = L-glutamyl 5-phosphate + NADPH + H(+). The protein operates within amino-acid biosynthesis; L-proline biosynthesis; L-glutamate 5-semialdehyde from L-glutamate: step 2/2. Functionally, catalyzes the NADPH-dependent reduction of L-glutamate 5-phosphate into L-glutamate 5-semialdehyde and phosphate. The product spontaneously undergoes cyclization to form 1-pyrroline-5-carboxylate. This Brucella suis biovar 1 (strain 1330) protein is Gamma-glutamyl phosphate reductase.